A 629-amino-acid polypeptide reads, in one-letter code: MNATRAEYPLASLYIGDLHPDVTEAMLYEKFSPAGPIMSIRVCRDIATRRSLGYAYINFQQPADAERALDTMNFEVIKGRPIRIMWSQRDPGLRKSGVGNVFIKNLDDSIDNKALYDTFSAFGDILSCKVVCDEYGSRGYGFVHFETQEAANRAIQTMNGMLLNDRKVFVGHFKSRRERELEYGAKVMEFTNVYIKNFGEDMDDKRLKEIFSAFGNTLSVKVMMDNSGRSRGFGFVNYGNHEEAQKAVTEMNGKEVNGRMVYVGRAQKRIERQGELKRKFEQIKQERINRYQGVNLYVKNLDDGIDDDRLRKEFSPYGTITSTKVMTEGGHSKGFGFVCFSSPEEATKAVTEMNGRIVSTKPLYVALAQRKEERKAILTNQYMQRLATMRAMPGPLLGSFQQPANYFLPTMPQPSNRAFYSPNPVAPVRPAPQWASHQSRPPQYQPPAPLMRAVPPRRMHSNISTMKQASTQVPRVPLQSQRVANIGTQTAGARAQVNASIMRAMPHYKYSCGVRNVQPIGSSAHLQQVLEPAVLMQGQEPLTASLLAAAPLQEQKQILGERIYPLIHEMHPTLAGKITGMLLEIDNSELLHMLESPESLHSKVEEAVAVLQAHQAKESAPKSAPQSLI.

4 RRM domains span residues 11-89, 99-175, 191-268, and 294-370; these read ASLY…WSQR, GNVF…HFKS, TNVY…RAQK, and VNLY…LAQR. The 78-residue stretch at 539 to 616 folds into the PABC domain; the sequence is QEPLTASLLA…AVAVLQAHQA (78 aa).

Belongs to the polyadenylate-binding protein type-1 family. As to quaternary structure, interacts with dazl in an RNA-independent manner. The C-terminus can self-associate and also interact with the C-terminus of pabpc1, independently of RNA. RRM 1 and RRM 2 interact with both eif4g1 and paip1, and the C-terminus also interacts with paip1. Prior to oocyte maturation, found in a complex with dazl and pum2 proteins and spdy1 mRNA; pum2 dissociates from the complex during maturation. Interacts with the translation termination factor sup35/erf3.

It localises to the cytoplasm. Binds and protects the poly(A) tail of mRNA with or without an AU-rich element (ARE) and prevents mRNA deadenylation. Stimulates the translation of mRNAs to which it is bound during early development. This Xenopus laevis (African clawed frog) protein is Embryonic polyadenylate-binding protein B (epabp-b).